The following is a 123-amino-acid chain: Small ribosomal subunit protein uS12cz/uS12cy (123 aa).

It belongs to the universal ribosomal protein uS12 family. Part of the 30S ribosomal subunit.

Its subcellular location is the plastid. It is found in the chloroplast. In terms of biological role, with S4 and S5 plays an important role in translational accuracy. Located at the interface of the 30S and 50S subunits. The sequence is that of Small ribosomal subunit protein uS12cz/uS12cy (rps12-A) from Daucus carota (Wild carrot).